A 159-amino-acid polypeptide reads, in one-letter code: Eukaryotic translation initiation factor 5A-1 (159 aa).

Residues 1-12 (MSDEEHHFESKA) are compositionally biased toward basic and acidic residues. Residues 1 to 23 (MSDEEHHFESKADAGASKTYPQQ) form a disordered region. Lysine 52 carries the hypusine modification.

The protein belongs to the eIF-5A family. Lys-52 undergoes hypusination, a unique post-translational modification that consists in the addition of a butylamino group from spermidine to lysine side chain, leading to the formation of the unusual amino acid hypusine. eIF-5As are the only known proteins to undergo this modification, which is essential for their function.

Translation factor that promotes translation elongation and termination, particularly upon ribosome stalling at specific amino acid sequence contexts. Binds between the exit (E) and peptidyl (P) site of the ribosome and promotes rescue of stalled ribosome: specifically required for efficient translation of polyproline-containing peptides as well as other motifs that stall the ribosome. Acts as a ribosome quality control (RQC) cofactor by joining the RQC complex to facilitate peptidyl transfer during CAT tailing step. The chain is Eukaryotic translation initiation factor 5A-1 (EIF-5A1) from Nicotiana plumbaginifolia (Leadwort-leaved tobacco).